Consider the following 1264-residue polypeptide: TBC1 domain family member 9 (1264 aa).

GRAM domains are found at residues 146–213 (VKFH…EKNA) and 293–361 (ERYR…EKAD). Residues 410–456 (KEFSGSCNSSDDEVYSRPSSLVSSSPQRSTSSDADGERPFNLNGNSV) form a disordered region. A compositionally biased stretch (low complexity) spans 425 to 441 (SRPSSLVSSSPQRSTSS). Residues 515–702 (GIPESMRGEL…VVVDCFFYEG (188 aa)) form the Rab-GAP TBC domain. The EF-hand domain occupies 886 to 921 (HSDVLASRLFQLLDENGDSLINFREFVSGLSAACHG). Over residues 1119–1138 (SEEHSLGGQMEDIKLEDSSP) the composition is skewed to basic and acidic residues. The disordered stretch occupies residues 1119–1162 (SEEHSLGGQMEDIKLEDSSPRDNGACSSMLISDDDTKDDSSMSS).

In terms of biological role, may act as a GTPase-activating protein for Rab family protein(s). This Mus musculus (Mouse) protein is TBC1 domain family member 9 (Tbc1d9).